Reading from the N-terminus, the 2481-residue chain is Tetratricopeptide repeat protein 28 (2481 aa).

N-acetylmethionine is present on Met-1. Over residues 1 to 14 (MEQSPPPAPEPTQG) the composition is skewed to pro residues. The interval 1 to 48 (MEQSPPPAPEPTQGPTPARSRRRREPESPPASAPIPLFGADTIGQRSP) is disordered. Position 28 is a phosphoserine (Ser-28). TPR repeat units follow at residues 58-91 (FVEK…DPQN), 93-125 (ILYS…NPKW), 126-159 (PKAY…DPKS), 196-229 (FVVV…GTCS), 234-267 (GSVF…AKTL), 274-307 (CRAH…AMKL), 314-347 (SSAL…AKQS), 354-387 (AREL…AKDL), 394-427 (ARAY…AQEL), 434-467 (MRAY…AEDL), 474-507 (GRAS…AQEL), 514-547 (GRAY…SMEV), 554-587 (ASTH…AREL), 594-627 (ARAL…APDL), 634-667 (GKVC…AKDL), 674-707 (AKAY…AQSL), 714-747 (FRAL…AHQV), 754-787 (ASAY…YQEL), 794-827 (CRAH…GQKL), 834-867 (AQVY…LQQL), 877-910 (GRAY…AQSL), 917-950 (AKAY…AHEL), 957-990 (AQAY…ARDM), 997-1030 (SDAA…AEET), 1037-1070 (GRAY…AAQM), 1077-1110 (TVSY…AEQL), 1117-1150 (AKIR…FETI), and 1169-1202 (TSSY…AFAD). Ser-1590 carries the post-translational modification Phosphoserine. Disordered regions lie at residues 2004–2055 (FVSK…DEEE), 2075–2161 (NTCF…DPQE), and 2176–2339 (AVER…PADA). 2 stretches are compositionally biased toward polar residues: residues 2029–2043 (AYLQ…QLPP) and 2096–2122 (SVSS…NSPF). Phosphoserine is present on Ser-2104. Over residues 2130–2146 (SSDTGESDQSSTETDST) the composition is skewed to low complexity. Residues 2149–2159 (SQEESNPKLDP) show a composition bias toward basic and acidic residues. Polar residues predominate over residues 2183–2214 (SGGQVSKSNNPEDGVQAPSSTAVFRASETSAF). A phosphoserine mark is found at Ser-2224 and Ser-2251. The span at 2238-2282 (RSSSLPKVSSGYSSPTTSEMSIKDSPSQHSGRPSPGCDSQTSQLD) shows a compositional bias: polar residues. Residues 2307–2339 (SPSSGHQSPAGSAPSPALSYSSAGSARSSPADA) are compositionally biased toward low complexity. 2 positions are modified to phosphoserine: Ser-2393 and Ser-2398. The segment at 2420-2467 (QHDGAPPKAPPNGHWRTETTSLGSLPLPAGPPATAPARPLRLPSGNGY) is disordered.

In terms of assembly, interacts with AURKB. Widely expressed in fetal tissues. In adult tissues, expressed in testis and ovary and, at much lower levels, in kidney and pancreas.

Its subcellular location is the cytoplasm. It localises to the cytoskeleton. It is found in the microtubule organizing center. The protein resides in the centrosome. The protein localises to the spindle. Its subcellular location is the spindle pole. It localises to the midbody. In terms of biological role, during mitosis, may be involved in the condensation of spindle midzone microtubules, leading to the formation of midbody. The protein is Tetratricopeptide repeat protein 28 (TTC28) of Homo sapiens (Human).